The chain runs to 96 residues: Putative septation protein SpoVG (96 aa).

It belongs to the SpoVG family.

Functionally, could be involved in septation. This is Putative septation protein SpoVG from Borrelia hermsii (strain HS1 / DAH).